Reading from the N-terminus, the 375-residue chain is o-succinylbenzoate synthase (375 aa).

Lysine 166 (proton donor) is an active-site residue. Residues aspartate 191, glutamate 216, and aspartate 241 each coordinate Mg(2+). The active-site Proton acceptor is lysine 265.

The protein belongs to the mandelate racemase/muconate lactonizing enzyme family. MenC type 2 subfamily. Homotetramer. Requires a divalent metal cation as cofactor.

It carries out the reaction (1R,6R)-6-hydroxy-2-succinyl-cyclohexa-2,4-diene-1-carboxylate = 2-succinylbenzoate + H2O. The catalysed reaction is N-acetyl-D-methionine = N-acetyl-L-methionine. Its pathway is quinol/quinone metabolism; 1,4-dihydroxy-2-naphthoate biosynthesis; 1,4-dihydroxy-2-naphthoate from chorismate: step 4/7. It functions in the pathway quinol/quinone metabolism; menaquinone biosynthesis. Functionally, converts 2-succinyl-6-hydroxy-2,4-cyclohexadiene-1-carboxylate (SHCHC) to 2-succinylbenzoate (OSB). Also acts as a N-succinylamino acid racemase (NSAR) that catalyzes the racemization of N-succinyl-D/L-phenylalanine. Can catalyze the racemization of a broad range of N-acylamino acids, including N-acetyl-D-methionine, N-formyl-D/L-methionine, N-formyl-D/L-norleucine, N-formyl-D/L-aminobutyric acid, N-formyl-D/L-norvaline, N-formyl-D/L-homophenylalanine, N-carbamoyl-D-methionine and N-carbamoyl-D-norleucine. May be a bifunctional enzyme involved in menaquinone biosynthesis and in an irreversible pathway for the conversion of D- to L-amino acids, thereby facilitating the survival and/or growth of the organism. In Geobacillus stearothermophilus (Bacillus stearothermophilus), this protein is o-succinylbenzoate synthase.